The chain runs to 300 residues: Acetylglutamate kinase (300 aa).

Substrate is bound by residues 69-70 (GG), Arg91, and Asn197.

Belongs to the acetylglutamate kinase family. ArgB subfamily.

The protein localises to the cytoplasm. It catalyses the reaction N-acetyl-L-glutamate + ATP = N-acetyl-L-glutamyl 5-phosphate + ADP. It functions in the pathway amino-acid biosynthesis; L-arginine biosynthesis; N(2)-acetyl-L-ornithine from L-glutamate: step 2/4. In terms of biological role, catalyzes the ATP-dependent phosphorylation of N-acetyl-L-glutamate. The polypeptide is Acetylglutamate kinase (Kineococcus radiotolerans (strain ATCC BAA-149 / DSM 14245 / SRS30216)).